Here is a 565-residue protein sequence, read N- to C-terminus: MWLCALSLISLTACLSLGHPSLPPVVHTVHGKVLGKYVTLEGFSQPVAVFLGVPFAKPPLGSLRFAPPEPAEPWSFVKHTTSYPPLCYQNPEAALRLAELFTNQRKIIPHKFSEDCLYLNIYTPADLTQNSRLPVMVWIHGGGLVIDGASTYDGVPLAVHENVVVVVIQYRLGIWGFFSTEDEHSRGNWGHLDQVAALHWVQDNIANFGGNPGSVTIFGESAGGESVSVLVLSPLAKNLFHRAIAQSSVIFNPCLFGRAARPLAKKIAALAGCKTTTSAAMVHCLRQKTEDELLEVSLKMKFGTVDFLGDPRESYPFLPTVIDGVLLPKAPEEILAEKSFNTVPYMVGINKHEFGWIIPMFLDFPLSERKLDQKTAASILWQAYPILNISEKLIPAAIEKYLGGTEDPATMTDLFLDLIGDIMFGVPSVIVSRSHRDAGAPTYMYEYQYRPSFVSDDRPQELLGDHADELFSVWGAPFLKEGASEEEINLSKMVMKFWANFARNGNPNGEGLPHWPEYDQKEGYLQIGVPAQAAHRLKDKEVDFWTELRAKETAERSSHREHVEL.

The N-terminal stretch at 1–18 (MWLCALSLISLTACLSLG) is a signal peptide. The cysteines at positions 87 and 116 are disulfide-linked. The active-site Acyl-ester intermediate is Ser221. Cys273 and Cys284 form a disulfide bridge. The active-site Charge relay system is the Glu353. Ser378 carries the post-translational modification Phosphoserine. Asn388 is a glycosylation site (N-linked (GlcNAc...) asparagine). His466 functions as the Charge relay system in the catalytic mechanism. A glycan (N-linked (GlcNAc...) asparagine) is linked at Asn489.

This sequence belongs to the type-B carboxylesterase/lipase family. In terms of assembly, homotrimer and homohexamer. Binds to beta-glucuronidase. Detected in kidney, liver and lung.

The protein localises to the endoplasmic reticulum lumen. It localises to the cytoplasm. The protein resides in the lipid droplet. The catalysed reaction is a carboxylic ester + H2O = an alcohol + a carboxylate + H(+). It catalyses the reaction cholesteryl (9Z-octadecenoate) + H2O = cholesterol + (9Z)-octadecenoate + H(+). It carries out the reaction 2-(5Z,8Z,11Z,14Z-eicosatetraenoyl)-glycerol + H2O = glycerol + (5Z,8Z,11Z,14Z)-eicosatetraenoate + H(+). The enzyme catalyses prostaglandin E2 1-glyceryl ester + H2O = prostaglandin E2 + glycerol + H(+). The catalysed reaction is a cholesterol ester + H2O = cholesterol + a fatty acid + H(+). It catalyses the reaction prostaglandin F2alpha 1-glyceryl ester + H2O = prostaglandin F2alpha + glycerol + H(+). Functionally, involved in the detoxification of xenobiotics and in the activation of ester and amide prodrugs. Hydrolyzes aromatic and aliphatic esters, but has no catalytic activity toward amides or a fatty acyl-CoA ester. Displays fatty acid ethyl ester synthase activity, catalyzing the ethyl esterification of oleic acid to ethyloleate. Converts monoacylglycerides to free fatty acids and glycerol. Hydrolyzes of 2-arachidonoylglycerol and prostaglandins. Hydrolyzes cellular cholesteryl esters to free cholesterols and promotes reverse cholesterol transport (RCT) by facilitating both the initial and final steps in the process. First of all, allows free cholesterol efflux from macrophages to extracellular cholesterol acceptors and secondly, releases free cholesterol from lipoprotein-delivered cholesteryl esters in the liver for bile acid synthesis or direct secretion into the bile. This is Liver carboxylesterase 1 from Mus musculus (Mouse).